Consider the following 1505-residue polypeptide: Homeobox protein cut-like 1 (1505 aa).

The stretch at 56 to 407 (LLKSFQGEID…ALRISNSDLS (352 aa)) forms a coiled coil. Composition is skewed to polar residues over residues 396-407 (NAALRISNSDLS) and 440-451 (EQASNTNGTHQF). 4 disordered regions span residues 396 to 455 (NAAL…SPAG), 512 to 552 (YSTN…EEMD), 646 to 669 (PKRRNGSEGNITTRIRASETGSDE), and 682 to 704 (LQVQKTAEPAQPSSASGSGNSDD). Positions 516–546 (SISSQSPLQQSPDVNGMAPSPSQSESAGSVS) are enriched in low complexity. A Phosphoserine modification is found at E540. Positions 542-629 (AGSVSEGEEM…ILALRSIQGR (88 aa)) form a DNA-binding region, CUT 1. A compositionally biased stretch (low complexity) spans 694-703 (SSASGSGNSD). Residue S763 is modified to Phosphoserine. The segment at 768-802 (SAAPEAGASALPNPPALKKEAQDAPGLDPQGAADC) is disordered. Glycyl lysine isopeptide (Lys-Gly) (interchain with G-Cter in SUMO2) cross-links involve residues K785, K811, and K842. The span at 815–853 (GRSGAWKDHWWSAVQPERRNAASSEEAKAEETGGGKEKG) shows a compositional bias: basic and acidic residues. The tract at residues 815–930 (GRSGAWKDHW…KPTKPSVPPL (116 aa)) is disordered. Polar residues-rich tracts occupy residues 868–877 (SQLQGPSSSE) and 887–911 (SPYSQSSELSLTGASRSETPQNSPL). At S909 the chain carries Phosphoserine. The segment at residues 934–1021 (QYEVYMYQEV…QGVLPVQGQQ (88 aa)) is a DNA-binding region (CUT 2). Polar residues predominate over residues 1036-1049 (LQQGCVSSESTPKT). The tract at residues 1036–1110 (LQQGCVSSES…QPTTPLPLSG (75 aa)) is disordered. A compositionally biased stretch (low complexity) spans 1050 to 1066 (SASCSPAPESPMSSSES). Residues S1059 and S1069 each carry the phosphoserine modification. The CUT 3 DNA-binding region spans 1117–1204 (QELVAMSPEL…VEKLMDMKRM (88 aa)). Residues 1210–1247 (MKRRHSSVSDSQPCEPPSVGTEYSQGASPQPQHQLKKP) form a disordered region. The segment covering 1230-1242 (TEYSQGASPQPQH) has biased composition (polar residues). The homeobox DNA-binding region spans 1244 to 1303 (LKKPRVVLAPEEKEALKRAYQQKPYPSPKTIEDLATQLNLKTSTVINWFHNYRSRIRREL). S1270 carries the post-translational modification Phosphoserine. K1284 participates in a covalent cross-link: Glycyl lysine isopeptide (Lys-Gly) (interchain with G-Cter in SUMO2). Residues 1312 to 1480 (SQGQAGASDS…SRDNPLRKKK (169 aa)) are disordered. The span at 1316 to 1333 (AGASDSPSARSGRAAPSS) shows a compositional bias: low complexity. S1337 is modified (phosphoserine). Composition is skewed to basic and acidic residues over residues 1353 to 1368 (EEPKSQGEAEREEVPR) and 1384 to 1394 (DDARDDDHEGG). Composition is skewed to low complexity over residues 1405-1436 (PASATATAAPAAPEDAATSAAAAPGEGPAAPS) and 1443-1455 (NSSSSSAPRRPSS). Position 1455 is a phosphoserine (S1455). Residues 1467-1476 (GARDSRDNPL) show a composition bias toward basic and acidic residues. A phosphoserine mark is found at S1486 and S1496.

This sequence belongs to the CUT homeobox family. As to quaternary structure, interacts with BANP. Interacts with SATB1 (via DNA-binding domains); the interaction inhibits the attachment of both proteins to DNA. Post-translationally, phosphorylated by PKA. As cells progress into S phase, a fraction of CUX1 molecules is proteolytically processed into N-terminally truncated proteins of 110 kDa by CTSL. Cell cycle-dependent processing of CUX1 serves to generate a CDP/Cux p110 with distinct DNA binding and transcriptional properties.

Its subcellular location is the nucleus. Transcription factor involved in the control of neuronal differentiation in the brain. Regulates dendrite development and branching, and dendritic spine formation in cortical layers II-III. Also involved in the control of synaptogenesis. In addition, it has probably a broad role in mammalian development as a repressor of developmentally regulated gene expression. May act by preventing binding of positively-activing CCAAT factors to promoters. Component of nf-munr repressor; binds to the matrix attachment regions (MARs) (5' and 3') of the immunoglobulin heavy chain enhancer. Represses T-cell receptor (TCR) beta enhancer function by binding to MARbeta, an ATC-rich DNA sequence located upstream of the TCR beta enhancer. Binds to the TH enhancer; may require the basic helix-loop-helix protein TCF4 as a coactivator. Functionally, plays a role in cell cycle progression, in particular at the G1/S transition. As cells progress into S phase, a fraction of CUX1 molecules is proteolytically processed into N-terminally truncated proteins of 110 kDa. While CUX1 only transiently binds to DNA and carries the CCAAT-displacement activity, CDP/Cux p110 makes a stable interaction with DNA and stimulates expression of genes such as POLA1. This is Homeobox protein cut-like 1 from Homo sapiens (Human).